The sequence spans 455 residues: Xylan O-acetyltransferase 3 (455 aa).

A compositionally biased stretch (low complexity) spans methionine 1 to threonine 15. Positions methionine 1–arginine 32 are disordered. Topologically, residues methionine 1 to proline 42 are cytoplasmic. Over residues serine 16 to alanine 28 the composition is skewed to pro residues. The chain crosses the membrane as a helical; Signal-anchor for type II membrane protein span at residues valine 43–glycine 59. The Lumenal portion of the chain corresponds to glutamate 60–glutamine 455. N-linked (GlcNAc...) asparagine glycosylation is found at asparagine 82, asparagine 107, and asparagine 146. 4 disulfides stabilise this stretch: cysteine 96/cysteine 147, cysteine 118/cysteine 183, cysteine 127/cysteine 423, and cysteine 339/cysteine 419. Positions glycine 170 to serine 172 match the GDS motif motif. The active-site Nucleophile is the serine 172. Asparagine 278 and asparagine 348 each carry an N-linked (GlcNAc...) asparagine glycan. The active-site Proton donor is the aspartate 418. The short motif at aspartate 418 to histidine 421 is the DXXH motif element. The Proton acceptor role is filled by histidine 421.

Belongs to the PC-esterase family. TBL subfamily. In terms of tissue distribution, highly expressed in leaves. Expressed in roots, stems and inflorescences.

It is found in the golgi apparatus membrane. Its function is as follows. Xylan acetyltransferase required for 2-O- and 3-O-monoacetylation of xylosyl residues in xylan. Catalyzes the 2-O-acetylation of xylan, followed by nonenzymatic acetyl migration to the O-3 position, resulting in products that are monoacetylated at both O-2 and O-3 positions. The polypeptide is Xylan O-acetyltransferase 3 (Oryza sativa subsp. japonica (Rice)).